The following is a 90-amino-acid chain: DNA-binding protein HU-alpha (90 aa).

It belongs to the bacterial histone-like protein family. As to quaternary structure, heterodimer of an alpha and a beta chain.

Histone-like DNA-binding protein which is capable of wrapping DNA to stabilize it, and thus to prevent its denaturation under extreme environmental conditions. This chain is DNA-binding protein HU-alpha (hupA), found in Serratia marcescens.